Here is a 414-residue protein sequence, read N- to C-terminus: 2,3-diketo-5-methylthiopentyl-1-phosphate enolase (414 aa).

The Proton acceptor role is filled by Lys99. Residues Lys148, 174–177 (KDDE), His265, Gly338, and 360–361 (GG) each bind substrate. Residues Lys174, Asp176, and Glu177 each contribute to the Mg(2+) site. Lys174 carries the post-translational modification N6-carboxylysine.

The protein belongs to the RuBisCO large chain family. Type IV subfamily. Homodimer. Mg(2+) serves as cofactor.

It carries out the reaction 5-methylsulfanyl-2,3-dioxopentyl phosphate = 2-hydroxy-5-methylsulfanyl-3-oxopent-1-enyl phosphate. It participates in amino-acid biosynthesis; L-methionine biosynthesis via salvage pathway; L-methionine from S-methyl-5-thio-alpha-D-ribose 1-phosphate: step 3/6. In terms of biological role, catalyzes the enolization of 2,3-diketo-5-methylthiopentyl-1-phosphate (DK-MTP-1-P) into 2-hydroxy-3-keto-5-methylthiopentenyl-1-phosphate (HK-MTPenyl-1-P). The protein is 2,3-diketo-5-methylthiopentyl-1-phosphate enolase of Bacillus cytotoxicus (strain DSM 22905 / CIP 110041 / 391-98 / NVH 391-98).